The primary structure comprises 399 residues: tRNA-specific 2-thiouridylase MnmA (399 aa).

ATP is bound by residues 18 to 25 (AMSGGVDS) and L44. C112 functions as the Nucleophile in the catalytic mechanism. Cysteines 112 and 213 form a disulfide. G136 lines the ATP pocket. The interaction with tRNA stretch occupies residues 163–165 (RDQ). Catalysis depends on C213, which acts as the Cysteine persulfide intermediate.

This sequence belongs to the MnmA/TRMU family.

Its subcellular location is the cytoplasm. It carries out the reaction S-sulfanyl-L-cysteinyl-[protein] + uridine(34) in tRNA + AH2 + ATP = 2-thiouridine(34) in tRNA + L-cysteinyl-[protein] + A + AMP + diphosphate + H(+). Its function is as follows. Catalyzes the 2-thiolation of uridine at the wobble position (U34) of tRNA, leading to the formation of s(2)U34. This Rhizobium rhizogenes (strain K84 / ATCC BAA-868) (Agrobacterium radiobacter) protein is tRNA-specific 2-thiouridylase MnmA.